A 397-amino-acid chain; its full sequence is Ethanolaminephosphotransferase 1 (397 aa).

Ala2 carries the N-acetylalanine modification. 10 helical membrane-spanning segments follow: residues 47-69 (WLAP…LLMA), 84-103 (HVPD…AYTL), 123-145 (LFDH…SIFG), 150-172 (GVSV…LSHW), 179-201 (ILFL…IVTA), 221-243 (LFTA…LNFF), 256-278 (VYEA…AWIL), 291-310 (VFYF…LIVC), 317-339 (CPTL…LGVA), and 344-366 (SILL…VRVV). Sec387 is a non-standard amino acid (selenocysteine).

It belongs to the CDP-alcohol phosphatidyltransferase class-I family. Mg(2+) serves as cofactor. It depends on Mn(2+) as a cofactor.

Its subcellular location is the endoplasmic reticulum membrane. The catalysed reaction is CDP-ethanolamine + a 1,2-diacyl-sn-glycerol = a 1,2-diacyl-sn-glycero-3-phosphoethanolamine + CMP + H(+). It carries out the reaction 1-O-alkyl-2-acyl-sn-glycerol + CDP-ethanolamine = a 1-O-alkyl-2-acyl-sn-glycero-3-phosphoethanolamine + CMP + H(+). It functions in the pathway phospholipid metabolism; phosphatidylethanolamine biosynthesis; phosphatidylethanolamine from ethanolamine: step 3/3. Ethanolaminephosphotransferase that catalyzes the transfer of phosphoethanolamine (PE) from CDP-ethanolamine to lipid acceptors, the final step in the synthesis of PE via the 'Kennedy' pathway. PE is the second most abundant phospholipid of membranes in mammals and is involved in various membrane-related cellular processes. The enzyme is critical for the synthesis of several PE species and also catalyzes the synthesis of plasmanyl-PE, a lipid required for proper myelination and neurodevelopment, from 1-alkyl-2-acylglycerol. The chain is Ethanolaminephosphotransferase 1 from Pongo abelii (Sumatran orangutan).